A 578-amino-acid chain; its full sequence is Polymerase acidic protein (578 aa).

The RNA polymerase is composed of three subunits: PB1, PB2 and PA. In terms of processing, phosphorylated on serines and threonines by host kinases.

Its function is as follows. Implicated in endonuclease cleavage of capped RNA primers. Displays an elongation factor activity in viral RNA synthesis. Dispensable for viral transcription, but not replication. The sequence is that of Polymerase acidic protein from Infectious salmon anemia virus (isolate Atlantic salmon/Norway/810/9/99) (ISAV).